Consider the following 451-residue polypeptide: Chromosomal replication initiator protein DnaA (451 aa).

Positions 1-94 (MKPDLSSLWQ…KPEPKPAQPS (94 aa)) are domain I, interacts with DnaA modulators. Residues 87–106 (EPKPAQPSALPTHHNKEENK) are disordered. Residues 95–113 (ALPTHHNKEENKPQTVIRS) form a domain II region. Residues 114–331 (YLNPKHVFEN…GALNRVSANA (218 aa)) form a domain III, AAA+ region region. ATP contacts are provided by G159, G161, K162, and T163. The segment at 332–451 (EFMGAAITID…WSNLIRTLSV (120 aa)) is domain IV, binds dsDNA.

Belongs to the DnaA family. In terms of assembly, oligomerizes as a right-handed, spiral filament on DNA at oriC.

The protein resides in the cytoplasm. Its function is as follows. Plays an essential role in the initiation and regulation of chromosomal replication. ATP-DnaA binds to the origin of replication (oriC) to initiate formation of the DNA replication initiation complex once per cell cycle. Binds the DnaA box (a 9 base pair repeat at the origin) and separates the double-stranded (ds)DNA. Forms a right-handed helical filament on oriC DNA; dsDNA binds to the exterior of the filament while single-stranded (ss)DNA is stabiized in the filament's interior. The ATP-DnaA-oriC complex binds and stabilizes one strand of the AT-rich DNA unwinding element (DUE), permitting loading of DNA polymerase. After initiation quickly degrades to an ADP-DnaA complex that is not apt for DNA replication. Binds acidic phospholipids. This is Chromosomal replication initiator protein DnaA from Pasteurella multocida (strain Pm70).